The chain runs to 396 residues: ATP-dependent RNA helicase eIF4A (396 aa).

A Q motif motif is present at residues 22 to 50 (HKFDELKLKEVLLRGIYGYGFVDPSAIQQ). The region spanning 53–223 (ILPIIEGHDV…DKFMNKPVRI (171 aa)) is the Helicase ATP-binding domain. 66–73 (AQSGTGKT) contacts ATP. Residues 171–174 (DEAD) carry the DEAD box motif. A Helicase C-terminal domain is found at 234–395 (GIQQYYINVE…ELPANIADLF (162 aa)).

The protein belongs to the DEAD box helicase family. eIF4A subfamily. Component of the eIF4F complex, which composition varies with external and internal environmental conditions. It is composed of at least eIF4A, eIF4E and eIF4G.

Its subcellular location is the cytoplasm. It carries out the reaction ATP + H2O = ADP + phosphate + H(+). In terms of biological role, ATP-dependent RNA helicase which is a subunit of the eIF4F complex involved in cap recognition and is required for mRNA binding to ribosome. In the current model of translation initiation, eIF4A unwinds RNA secondary structures in the 5'-UTR of mRNAs which is necessary to allow efficient binding of the small ribosomal subunit, and subsequent scanning for the initiator codon. The sequence is that of ATP-dependent RNA helicase eIF4A (TIF1) from Eremothecium gossypii (strain ATCC 10895 / CBS 109.51 / FGSC 9923 / NRRL Y-1056) (Yeast).